We begin with the raw amino-acid sequence, 94 residues long: U1-theraphotoxin-Sp1a (94 aa).

An N-terminal signal peptide occupies residues 1-22; it reads MIFLLPSIISVMLLAEPVLMLG. A propeptide spanning residues 23–58 is cleaved from the precursor; sequence DTEDADLMEMVQLSRPFFNPIIRAVELVELREERQR. 3 disulfide bridges follow: C60/C78, C67/C83, and C77/C88. V92 bears the Valine amide mark.

Belongs to the neurotoxin 14 (magi-1) family. OAIP-1 subfamily. As to expression, expressed by the venom gland.

The protein localises to the secreted. Its function is as follows. Probable ion channel inhibitor. Shows insecticidal activity. Acts synergistically with the neonicotinoid insecticide imidacloprid. Is neither a repellent that repels insects nor an attractant that is preferentially consumed by insects. Is very stable. The sequence is that of U1-theraphotoxin-Sp1a from Selenotypus plumipes (Australian featherleg tarantula).